A 467-amino-acid polypeptide reads, in one-letter code: Glutamate--tRNA ligase (467 aa).

A 'HIGH' region motif is present at residues 9 to 19 (PSPTGYLHIGG). The 'KMSKS' region motif lies at 237–241 (KLSKR). Lys240 serves as a coordination point for ATP.

Belongs to the class-I aminoacyl-tRNA synthetase family. Glutamate--tRNA ligase type 1 subfamily. In terms of assembly, monomer.

The protein localises to the cytoplasm. The catalysed reaction is tRNA(Glu) + L-glutamate + ATP = L-glutamyl-tRNA(Glu) + AMP + diphosphate. In terms of biological role, catalyzes the attachment of glutamate to tRNA(Glu) in a two-step reaction: glutamate is first activated by ATP to form Glu-AMP and then transferred to the acceptor end of tRNA(Glu). The polypeptide is Glutamate--tRNA ligase (Stenotrophomonas maltophilia (strain R551-3)).